Here is a 614-residue protein sequence, read N- to C-terminus: Chaperone protein DnaK (614 aa).

Thr-173 carries the phosphothreonine; by autocatalysis modification. Basic and acidic residues-rich tracts occupy residues 490 to 509 (EENA…RNEA) and 529 to 542 (EEDK…KEAL). Disordered stretches follow at residues 490–510 (EENA…NEAD), 524–555 (GENI…DDIK), and 575–614 (QAAQ…DNQK). Residues 575-584 (QAAQAQQQAQ) are compositionally biased toward low complexity. A compositionally biased stretch (basic and acidic residues) spans 599–614 (ADFKEVKDDDNQDNQK).

It belongs to the heat shock protein 70 family.

In terms of biological role, acts as a chaperone. The polypeptide is Chaperone protein DnaK (Staphylococcus saprophyticus subsp. saprophyticus (strain ATCC 15305 / DSM 20229 / NCIMB 8711 / NCTC 7292 / S-41)).